The sequence spans 38 residues: Alpha-conotoxin LvIC (38 aa).

Positions 1–21 are excised as a propeptide; sequence SNGRNAAAGDKPSYWITLAIT. Intrachain disulfides connect cysteine 23–cysteine 29 and cysteine 24–cysteine 34. Glutamine 35 carries the glutamine amide modification.

It belongs to the conotoxin A superfamily. In terms of processing, the two analogs ([DelQ14]LvIC and [D1G,DelQ14]LvIC) are amidated at their N-terminal Cys. Expressed by the venom gland.

It localises to the secreted. Its function is as follows. Alpha-conotoxins bind to the nicotinic acetylcholine receptors (nAChR) and inhibit them. This synthetic peptide inhibits rat alpha-6/alpha-3-beta-4 nAChR (IC(50)=3.3 uM). The sequence is that of Alpha-conotoxin LvIC from Conus lividus (Livid cone).